Consider the following 377-residue polypeptide: Subtilisin-like protease CPC735_012930 (377 aa).

Positions 1–20 (MSILFKIFASTLAVVSVVNA) are cleaved as a signal peptide. Positions 21–118 (GELLNFENER…VEPDRMASAT (98 aa)) are excised as a propeptide. The region spanning 36-114 (SYIVVMKDGT…HVKYVEPDRM (79 aa)) is the Inhibitor I9 domain. Residues 128-377 (SWGLGRISHT…NKLLYNKSGF (250 aa)) form the Peptidase S8 domain. Catalysis depends on charge relay system residues aspartate 160 and histidine 191. Asparagine 252 carries N-linked (GlcNAc...) asparagine glycosylation. The active-site Charge relay system is the serine 323. N-linked (GlcNAc...) asparagine glycans are attached at residues asparagine 364 and asparagine 373.

Belongs to the peptidase S8 family.

It localises to the secreted. Secreted subtilisin-like serine protease with keratinolytic activity that contributes to pathogenicity. This chain is Subtilisin-like protease CPC735_012930, found in Coccidioides posadasii (strain C735) (Valley fever fungus).